The following is a 249-amino-acid chain: tRNA (guanine-N(1)-)-methyltransferase (249 aa).

Residues Gly121 and 141-146 (LGDFVL) contribute to the S-adenosyl-L-methionine site.

The protein belongs to the RNA methyltransferase TrmD family. As to quaternary structure, homodimer.

Its subcellular location is the cytoplasm. The catalysed reaction is guanosine(37) in tRNA + S-adenosyl-L-methionine = N(1)-methylguanosine(37) in tRNA + S-adenosyl-L-homocysteine + H(+). Its function is as follows. Specifically methylates guanosine-37 in various tRNAs. This chain is tRNA (guanine-N(1)-)-methyltransferase, found in Cereibacter sphaeroides (strain KD131 / KCTC 12085) (Rhodobacter sphaeroides).